Reading from the N-terminus, the 188-residue chain is Protein SSX1 (188 aa).

2 disordered regions span residues 1–22 and 111–188; these read MNGD…EKRS and IMPK…EDDE. Positions 20–83 constitute a KRAB-related domain; it reads KRSKAFDDIA…KQATDFQGND (64 aa). Residues 115–125 are compositionally biased toward basic and acidic residues; that stretch reads KPAEDENDSKG. S123 bears the Phosphoserine mark. Over residues 153–170 the composition is skewed to basic residues; sequence KRSGPKRGKHAWTHRLRE. A compositionally biased stretch (acidic residues) spans 179–188; the sequence is EISDPEEDDE.

It belongs to the SSX family. As to expression, expressed at high level in the testis. Expressed at low level in thyroid. Not detected in tonsil, colon, lung, spleen, prostate, kidney, striated and smooth muscles. Detected in rhabdomyosarcoma and fibrosarcoma cell lines. Not detected in mesenchymal and epithelial cell lines. Expressed in testis.

Its subcellular location is the cytoplasm. The protein resides in the cytoskeleton. The protein localises to the flagellum axoneme. Functionally, could act as a modulator of transcription. Plays a role in spermatogenesis. In Homo sapiens (Human), this protein is Protein SSX1 (SSX1).